We begin with the raw amino-acid sequence, 201 residues long: L(+)-tartrate dehydratase subunit beta (201 aa).

The active site involves His37.

Belongs to the class-I fumarase family. Heterotetramer of two alpha and two beta subunits.

The catalysed reaction is (2R,3R)-tartrate = oxaloacetate + H2O. The chain is L(+)-tartrate dehydratase subunit beta (ttdB) from Shigella sonnei (strain Ss046).